A 1118-amino-acid chain; its full sequence is Collagenase ColG (1118 aa).

An N-terminal signal peptide occupies residues methionine 1–alanine 45. A propeptide spanning residues lysine 46–serine 110 is cleaved from the precursor. An S1 metalloprotease domain, degrades both FALGPA (furylacryloyl-Leu-Gly-Pro-Ala) and type I collagen region spans residues isoleucine 111 to leucine 786. Positions tyrosine 119–aspartate 388 are activator domain required for full activity on collagen. A catalytic subdomain region spans residues glycine 389–glycine 670. Residues lysine 396 to lysine 1118 form a degrades soluble FALGPA peptide (furylacryloyl-Leu-Gly-Pro-Ala) but not type I collagen region. Glutamate 498 contacts Ca(2+). Residue histidine 523 coordinates Zn(2+). The active site involves glutamate 524. Histidine 527 lines the Zn(2+) pocket. 3 residues coordinate Ca(2+): alanine 531, valine 535, and glycine 537. A Zn(2+)-binding site is contributed by glutamate 555. The tract at residues aspartate 679–alanine 790 is helper subdomain. The S2 domain stretch occupies residues threonine 787–aspartate 882. Positions 795, 796, 823, 825, 864, 890, 892, 894, 913, 918, 920, 921, 1009, 1011, 1013, 1014, 1032, 1037, 1039, and 1040 each coordinate Ca(2+). A PKD domain is found at alanine 797–threonine 885. Positions proline 886 to glycine 1003 are S3a collagen-binding domain. Residues lysine 1008 to lysine 1118 form an S3b collagen-binding domain region. Residues leucine 1102–tyrosine 1106 form a collagen-binding region.

The protein belongs to the peptidase M9B family. Collagenase subfamily. Ca(2+) serves as cofactor. Requires Zn(2+) as cofactor. Post-translationally, upon purification gives 67 kDa, 78 kDa, 82 kDa and 116 kDa (full-length) proteins all of which have the same N-terminus; only the longest form digests insoluble collagen. At least 2 in vivo isolated forms (C1b and C1c) are missing the second collagen-binding domain, ending on Lys-1006 and Lys-1018 respectively.

It localises to the secreted. It catalyses the reaction Digestion of native collagen in the triple helical region at Xaa-|-Gly bonds. With synthetic peptides, a preference is shown for Gly at P3 and P1', Pro and Ala at P2 and P2', and hydroxyproline, Ala or Arg at P3'.. Its activity is regulated as follows. Inhibited by 1-10-phenanthroline. Inhibited by peptidomimetic isoamyl-phosphonyl-Gly-Pro-Ala, which binds to Zn(2+). Inhibited by broad-spectrum zinc metalloprotease inhibitor batimastat. N-aryl mercaptoacetamide-based inhibitors have been isolated that act on clostridial collagenases with submicromolar affinity while having negligibile activity on human collagenases. Functionally, clostridial collagenases are among the most efficient degraders of eukaryotic collagen known; saprophytes use collagen as a carbon source while pathogens additionally digest collagen to aid in host colonization. Has both tripeptidylcarboxypeptidase on Gly-X-Y and endopeptidase activities; the endopeptidase cuts within the triple helix region of collagen while tripeptidylcarboxypeptidase successively digests the exposed ends, thus clostridial collagenases can digest large sections of collagen. Active on soluble type I collagen, insoluble collagen, azocoll, soluble PZ-peptide (all collagenase substrates) and gelatin. The full-length protein has collagenase activity, while the in vivo derived C-terminally truncated shorter versions only act on gelatin. In vitro digestion of soluble calf skin collagen fibrils requires both ColG and ColH; ColG forms missing the second collagen-binding domain are also synergistic with ColH, although their overall efficiency is decreased. The activator domain (residues 119-388) and catalytic subdomain (389-670) open and close around substrate using a Gly-rich hinge (387-397), allowing digestion when the protein is closed. Binding of collagen requires Ca(2+) and is inhibited by EGTA; the collagen-binding domain (CBD, S3a plus S3b) specifically recognizes the triple-helical conformation made by 3 collagen protein chains in the triple-helical region. Isolated CBD (S3a plus S3b) binds collagen fibrils and sheets of many tissues. This chain is Collagenase ColG, found in Hathewaya histolytica (Clostridium histolyticum).